Here is a 540-residue protein sequence, read N- to C-terminus: Probable G-protein coupled receptor 75 (540 aa).

At 1–46 (MNTSAPLQNVPNATLLNMPPLHGGNSTSLQEGLRDFIHTATLVTCT) the chain is on the extracellular side. Residues Asn2 and Asn25 are each glycosylated (N-linked (GlcNAc...) asparagine). The chain crosses the membrane as a helical span at residues 47 to 67 (FLLAIIFCLGSYGNFIVFLSF). At 68-86 (FDPSFRKFRTNFDFMILNL) the chain is on the cytoplasmic side. The chain crosses the membrane as a helical span at residues 87–107 (SFCDLFICGVTAPMFTFVLFF). At 108 to 120 (SSASSIPDSFCFT) the chain is on the extracellular side. A helical transmembrane segment spans residues 121–141 (FHLTSSGFVIMSLKMVAVIAL). The Cytoplasmic segment spans residues 142 to 160 (HRLRMVMGKQPNCTASFSC). The chain crosses the membrane as a helical span at residues 161–181 (ILLLTLLLWATSFTLATLATL). Over 182 to 205 (RTNKSHLCLPMSSLMDGEGKAILS) the chain is Extracellular. Asn184 is a glycosylation site (N-linked (GlcNAc...) asparagine). Residues 206 to 226 (LYVVDFTFCVAVVSVSYIMIA) form a helical membrane-spanning segment. Topologically, residues 227 to 318 (QTLRKNAQVK…INFSTAKDSK (92 aa)) are cytoplasmic. Residues 319 to 339 (AVVTCVVIVLSVLVCCLPLGI) form a helical membrane-spanning segment. The Extracellular segment spans residues 340-350 (SLVQMVLSDNG). Residues 351-371 (SFILYQFELFGFTLIFFKSGL) traverse the membrane as a helical segment. Residues 372-540 (NPFIYSRNSA…SAKQIPIPSV (169 aa)) are Cytoplasmic-facing. The disordered stretch occupies residues 443 to 475 (DQACGPSHSKESAASPKVSAGHQPCGQSSSTPI).

It belongs to the G-protein coupled receptor 1 family. In terms of tissue distribution, highly expressed in brain and heart. Also detected in skeletal muscle, liver and kidney. Also expressed by islet cells (at protein level).

The protein localises to the cell membrane. In terms of biological role, g protein-coupled receptor that is activated by the chemokine CCL5/RANTES. Probably coupled to heterotrimeric Gq proteins, it stimulates inositol trisphosphate production and calcium mobilization upon activation. Together with CCL5/RANTES, may play a role in neuron survival through activation of a downstream signaling pathway involving the PI3, Akt and MAP kinases. CCL5/RANTES may also regulate insulin secretion by pancreatic islet cells through activation of this receptor. The chain is Probable G-protein coupled receptor 75 (Gpr75) from Mus musculus (Mouse).